A 273-amino-acid polypeptide reads, in one-letter code: Putative inactive beta-glucuronidase protein GUSBP11 (273 aa).

The tract at residues 1 to 20 is disordered; sequence MTAAETGRGKPRLGGGSGLG.

This sequence belongs to the glycosyl hydrolase 2 family.

The polypeptide is Putative inactive beta-glucuronidase protein GUSBP11 (GUSBP11) (Homo sapiens (Human)).